A 230-amino-acid polypeptide reads, in one-letter code: Orotidine 5'-phosphate decarboxylase (230 aa).

Substrate-binding positions include Asp11, Lys34, 61–70, Thr117, Arg179, Gln188, Gly208, and Arg209; that span reads DLKLHDIPNT. Lys63 serves as the catalytic Proton donor.

Belongs to the OMP decarboxylase family. Type 1 subfamily. Homodimer.

The enzyme catalyses orotidine 5'-phosphate + H(+) = UMP + CO2. The protein operates within pyrimidine metabolism; UMP biosynthesis via de novo pathway; UMP from orotate: step 2/2. Its function is as follows. Catalyzes the decarboxylation of orotidine 5'-monophosphate (OMP) to uridine 5'-monophosphate (UMP). In Streptococcus pyogenes serotype M28 (strain MGAS6180), this protein is Orotidine 5'-phosphate decarboxylase.